Reading from the N-terminus, the 168-residue chain is Phosphopantetheine adenylyltransferase (168 aa).

Substrate is bound at residue Thr-14. ATP is bound by residues Thr-14 to Phe-15 and His-22. Lys-46, Leu-78, and Arg-92 together coordinate substrate. ATP contacts are provided by residues Gly-93–Arg-95, Glu-103, and Tyr-128–Ser-134.

This sequence belongs to the bacterial CoaD family. Homohexamer. Mg(2+) is required as a cofactor.

It is found in the cytoplasm. The catalysed reaction is (R)-4'-phosphopantetheine + ATP + H(+) = 3'-dephospho-CoA + diphosphate. It functions in the pathway cofactor biosynthesis; coenzyme A biosynthesis; CoA from (R)-pantothenate: step 4/5. Reversibly transfers an adenylyl group from ATP to 4'-phosphopantetheine, yielding dephospho-CoA (dPCoA) and pyrophosphate. The sequence is that of Phosphopantetheine adenylyltransferase from Xanthomonas euvesicatoria pv. vesicatoria (strain 85-10) (Xanthomonas campestris pv. vesicatoria).